The following is a 456-amino-acid chain: Gamma-aminobutyric acid receptor subunit alpha-1 (456 aa).

The signal sequence occupies residues Met-1–Gly-27. The Extracellular portion of the chain corresponds to Gln-28 to Phe-253. Asn-38 is a glycosylation site (N-linked (GlcNAc...) asparagine). Arg-94 is a binding site for 4-aminobutanoate. Asn-138 carries N-linked (GlcNAc...) asparagine glycosylation. Thr-157 lines the 4-aminobutanoate pocket. Cysteines 166 and 180 form a disulfide. The helical transmembrane segment at Val-254–Leu-274 threads the bilayer. The Cytoplasmic segment spans residues Asn-275 to Val-279. A helical membrane pass occupies residues Pro-280–Arg-301. The Extracellular portion of the chain corresponds to Asn-302–Thr-311. Residues Ala-312–Thr-333 form a helical membrane-spanning segment. Topologically, residues Val-334–Arg-421 are cytoplasmic. The helical transmembrane segment at Leu-422–Thr-441 threads the bilayer. Over Tyr-442–Gln-456 the chain is Extracellular.

Belongs to the ligand-gated ion channel (TC 1.A.9) family. Gamma-aminobutyric acid receptor (TC 1.A.9.5) subfamily. GABRA1 sub-subfamily. As to quaternary structure, heteropentamer, formed by a combination of alpha (GABRA1-6), beta (GABRB1-3), gamma (GABRG1-3), delta (GABRD), epsilon (GABRE), rho (GABRR1-3), pi (GABRP) and theta (GABRQ) subunits, each subunit exhibiting distinct physiological and pharmacological properties. Interacts with UBQLN1. Interacts with TRAK1. Interacts with KIF21B. Identified in a complex of 720 kDa composed of LHFPL4, NLGN2, GABRA1, GABRB2, GABRG2 and GABRB3. Interacts with LHFPL4. Interacts with NLGN2. Interacts with SHISA7; interaction leads to the regulation of GABA(A) receptor trafficking, channel deactivation kinetics and pharmacology.

It is found in the postsynaptic cell membrane. The protein resides in the cell membrane. The protein localises to the cytoplasmic vesicle membrane. The catalysed reaction is chloride(in) = chloride(out). Its activity is regulated as follows. Allosterically activated by benzodiazepines, the neuroanesthetic alphaxalone and pentobarbital. Inhibited by the antagonist bicuculline. Potentiated by histamine. Functionally, alpha subunit of the heteropentameric ligand-gated chloride channel gated by gamma-aminobutyric acid (GABA), a major inhibitory neurotransmitter in the brain. GABA-gated chloride channels, also named GABA(A) receptors (GABAAR), consist of five subunits arranged around a central pore and contain GABA active binding site(s) located at the alpha and beta subunit interface(s). When activated by GABA, GABAARs selectively allow the flow of chloride anions across the cell membrane down their electrochemical gradient. Alpha-1/GABRA1-containing GABAARs are largely synaptic. Chloride influx into the postsynaptic neuron following GABAAR opening decreases the neuron ability to generate a new action potential, thereby reducing nerve transmission. GABAARs containing alpha-1 and beta-2 or -3 subunits exhibit synaptogenic activity; the gamma-2 subunit being necessary but not sufficient to induce rapid synaptic contacts formation. GABAARs function also as histamine receptor where histamine binds at the interface of two neighboring beta subunits and potentiates GABA response. GABAARs containing alpha, beta and epsilon subunits also permit spontaneous chloride channel activity while preserving the structural information required for GABA-gated openings. Alpha-1-mediated plasticity in the orbitofrontal cortex regulates context-dependent action selection. Together with rho subunits, may also control neuronal and glial GABAergic transmission in the cerebellum. The sequence is that of Gamma-aminobutyric acid receptor subunit alpha-1 (GABRA1) from Macaca fascicularis (Crab-eating macaque).